A 96-amino-acid chain; its full sequence is ATYYKVKLLTPEGEKEFECPDDVYILDNAEEIGIDLPYSCRAGSCSSCAGKVVSGKVDNSDNSFLNDDNMDAGYVLTCHAYANSDVVIETHKEEEV.

The 91-residue stretch at 4–94 folds into the 2Fe-2S ferredoxin-type domain; that stretch reads YKVKLLTPEG…DVVIETHKEE (91 aa). Positions 40, 45, 48, and 78 each coordinate [2Fe-2S] cluster.

Belongs to the 2Fe2S plant-type ferredoxin family. [2Fe-2S] cluster serves as cofactor.

The protein resides in the plastid. Its subcellular location is the chloroplast. Its function is as follows. Ferredoxins are iron-sulfur proteins that transfer electrons in a wide variety of metabolic reactions. The polypeptide is Ferredoxin (Panax ginseng (Korean ginseng)).